The chain runs to 825 residues: Fibrous sheath CABYR-binding protein (825 aa).

Disordered regions lie at residues 1–43 (MVGK…SYSA) and 113–139 (QDVEIPPNIPSVQLKMDRSQQTSRTGY). Positions 21–40 (KSSSPKATHRIGNTSGSKGS) are enriched in polar residues. At S160 the chain carries Phosphoserine. 3 disordered regions span residues 168–232 (SRPD…LLED), 244–718 (QEGS…DKHS), and 732–751 (GEASAEVSPPPSEQTPEDEA). The span at 200–220 (PATNSNEEIGQKNISRTSFTQ) shows a compositional bias: polar residues. Over residues 277–290 (ATAKAEPRPAEETH) the composition is skewed to basic and acidic residues. Low complexity-rich tracts occupy residues 348 to 357 (AEILPPSAEE) and 398 to 407 (PLPAEGALEE). A compositionally biased stretch (pro residues) spans 610–676 (VQPPPAEEAP…PAEVQPPPAE (67 aa)).

As to quaternary structure, interacts with CABYR. Interacts with ROPN1 and ROPN1L; the interaction increases upon spermatozoa capacitation conditions. In terms of processing, phosphorylated by PKA upon spermatozoa capacitation conditions.

Its subcellular location is the cell projection. It is found in the cilium. The protein resides in the flagellum. May be involved in the later stages of fibrous sheath biogenesis and spermatozoa capacitation. Inhibits ROPN1 and ROPN1L SUMOylation. Binds calcium. This Homo sapiens (Human) protein is Fibrous sheath CABYR-binding protein (FSCB).